We begin with the raw amino-acid sequence, 974 residues long: Membrane-associated phosphatidylinositol transfer protein 3 (974 aa).

Ser30, Ser31, Ser109, Ser295, Ser298, Ser321, Ser343, and Ser495 each carry phosphoserine. The tract at residues 310-347 is disordered; it reads CSLASSKRLSKSNVDVSSGVEDEDPKRPLPRKQSDSST. Polar residues predominate over residues 312 to 325; the sequence is LASSKRLSKSNVDV. In terms of domain architecture, DDHD spans 390–594; that stretch reads FDFDVSDFFL…VAFILRQVMR (205 aa). Residues 497 to 535 form a disordered region; it reads PLLDAPASPPQAPRFQRTERRLSKGSSHSDSSESSDSLA. Positions 520 to 533 are enriched in low complexity; that stretch reads KGSSHSDSSESSDS. Residues Ser612, Ser907, Ser928, and Ser946 each carry the phosphoserine modification. A disordered region spans residues 927–974; sequence MSVQQPDPPAANPKPERAQSQPESDKDHERPLPALSWARGPPKFESVP.

Belongs to the PtdIns transfer protein family. PI transfer class IIA subfamily. In terms of assembly, interacts with PTK2B via its C-terminus.

It localises to the endomembrane system. Its function is as follows. Catalyzes the transfer of phosphatidylinositol and phosphatidylcholine between membranes (in vitro). Binds calcium ions. This Mus musculus (Mouse) protein is Membrane-associated phosphatidylinositol transfer protein 3 (Pitpnm3).